Reading from the N-terminus, the 377-residue chain is Nitric oxide reductase FlRd-NAD(+) reductase (377 aa).

It belongs to the FAD-dependent oxidoreductase family. FAD serves as cofactor.

The protein localises to the cytoplasm. It catalyses the reaction 2 reduced [nitric oxide reductase rubredoxin domain] + NAD(+) + H(+) = 2 oxidized [nitric oxide reductase rubredoxin domain] + NADH. Its pathway is nitrogen metabolism; nitric oxide reduction. One of at least two accessory proteins for anaerobic nitric oxide (NO) reductase. Reduces the rubredoxin moiety of NO reductase. The protein is Nitric oxide reductase FlRd-NAD(+) reductase of Escherichia coli O6:K15:H31 (strain 536 / UPEC).